The primary structure comprises 555 residues: Glucose-6-phosphate isomerase (555 aa).

Glu-365 serves as the catalytic Proton donor. Catalysis depends on residues His-396 and Lys-522.

This sequence belongs to the GPI family.

It localises to the cytoplasm. It catalyses the reaction alpha-D-glucose 6-phosphate = beta-D-fructose 6-phosphate. It functions in the pathway carbohydrate biosynthesis; gluconeogenesis. It participates in carbohydrate degradation; glycolysis; D-glyceraldehyde 3-phosphate and glycerone phosphate from D-glucose: step 2/4. In terms of biological role, catalyzes the reversible isomerization of glucose-6-phosphate to fructose-6-phosphate. The chain is Glucose-6-phosphate isomerase from Psychrobacter cryohalolentis (strain ATCC BAA-1226 / DSM 17306 / VKM B-2378 / K5).